The sequence spans 173 residues: Skp-like protein (173 aa).

Positions 1-19 are cleaved as a signal peptide; it reads MKKFLLLSLMSLASSTVFA.

The protein belongs to the Skp family.

The protein is Skp-like protein of Chlamydia muridarum (strain MoPn / Nigg).